The sequence spans 136 residues: MKPAARRKARILALQAIYSWQLSGNAIADIEQQMLIENDVTKIDVEYFKDLASGVAVNYKQLDEAVSPHLTRPFDELDMVERAILRLSSYELKFREDVPYKVAINESIELAKMFGAEDSHKFVNGVLDKAVKHLRK.

It belongs to the NusB family.

In terms of biological role, involved in transcription antitermination. Required for transcription of ribosomal RNA (rRNA) genes. Binds specifically to the boxA antiterminator sequence of the ribosomal RNA (rrn) operons. The sequence is that of Transcription antitermination protein NusB from Pseudoalteromonas translucida (strain TAC 125).